A 198-amino-acid polypeptide reads, in one-letter code: Recombination protein RecR (198 aa).

The C4-type zinc finger occupies 57-72 (CSICGNLTDDDPCHIC). In terms of domain architecture, Toprim spans 80–175 (EIILVVEDSK…KVTRLARGLA (96 aa)).

The protein belongs to the RecR family.

Its function is as follows. May play a role in DNA repair. It seems to be involved in an RecBC-independent recombinational process of DNA repair. It may act with RecF and RecO. This is Recombination protein RecR from Streptococcus equi subsp. equi (strain 4047).